Here is a 134-residue protein sequence, read N- to C-terminus: Large ribosomal subunit protein uL16c (134 aa).

It belongs to the universal ribosomal protein uL16 family. In terms of assembly, part of the 50S ribosomal subunit.

It localises to the plastid. It is found in the chloroplast. The polypeptide is Large ribosomal subunit protein uL16c (Oltmannsiellopsis viridis (Marine flagellate)).